A 1532-amino-acid chain; its full sequence is Multidrug resistance-associated protein 1 (1532 aa).

At Met-1–Phe-33 the chain is on the extracellular side. An N-linked (GlcNAc...) asparagine glycan is attached at Asn-19. The helical transmembrane segment at Gln-34–Phe-54 threads the bilayer. Residues Leu-55–Lys-74 are Cytoplasmic-facing. The chain crosses the membrane as a helical span at residues Thr-75–Glu-95. At Arg-96–Met-100 the chain is on the extracellular side. Residues Leu-101 to Thr-121 traverse the membrane as a helical segment. Over Phe-122–Gln-133 the chain is Cytoplasmic. A helical membrane pass occupies residues Ser-134–Arg-154. Residues Ser-155 to Asp-172 are Extracellular-facing. Residues Ser-173–Asp-193 traverse the membrane as a helical segment. The Cytoplasmic segment spans residues Ser-194–Val-317. Tyr-277 carries the post-translational modification Phosphotyrosine. Ser-290 bears the Phosphoserine mark. The chain crosses the membrane as a helical span at residues Leu-318–Leu-338. Positions Phe-326–Gln-609 constitute an ABC transmembrane type-1 1 domain. Topologically, residues Met-339–Gly-364 are extracellular. Residues Tyr-365–Tyr-385 traverse the membrane as a helical segment. Residues Phe-386–Tyr-441 are Cytoplasmic-facing. A helical transmembrane segment spans residues Ile-442–Asn-462. The Extracellular segment spans residues Leu-463–Pro-465. The chain crosses the membrane as a helical span at residues Ser-466–Met-486. The Cytoplasmic portion of the chain corresponds to Lys-487–Ala-548. Lys-504 is subject to N6-succinyllysine. The helical transmembrane segment at Val-549 to Phe-569 threads the bilayer. Topologically, residues Val-570–Asn-591 are extracellular. Residues Ile-592–Val-612 form a helical membrane-spanning segment. Residues Ser-613–Met-967 are Cytoplasmic-facing. The ABC transporter 1 domain occupies Ile-645–Thr-869. ATP is bound at residue Gly-679–Ser-686. Phosphoserine occurs at positions 879, 883, 916, and 931. Residues Lys-968 to Ser-988 traverse the membrane as a helical segment. The ABC transmembrane type-1 2 domain maps to Ser-975–Thr-1257. At Ala-989 to Leu-1026 the chain is on the extracellular side. A helical membrane pass occupies residues Gln-1027 to Arg-1047. Residues Arg-1048–Gln-1090 lie on the Cytoplasmic side of the membrane. The helical transmembrane segment at Val-1091–Leu-1111 threads the bilayer. Position 1112 (Ala-1112) is a topological domain, extracellular. Residues Thr-1113–Phe-1133 traverse the membrane as a helical segment. Residues Tyr-1134–Leu-1204 are Cytoplasmic-facing. A helical membrane pass occupies residues Glu-1205–Ser-1225. Residues Leu-1226–Ser-1227 are Extracellular-facing. Residues Ala-1228–Leu-1248 traverse the membrane as a helical segment. Topologically, residues Val-1249–Val-1532 are cytoplasmic. The ABC transporter 2 domain maps to Val-1294–Asp-1528. Gly-1328 to Ser-1335 serves as a coordination point for ATP.

This sequence belongs to the ABC transporter superfamily. ABCC family. Conjugate transporter (TC 3.A.1.208) subfamily. Glycosylated. In terms of tissue distribution, skeletal muscle, brain, heart, spleen, lung and kidney.

The protein resides in the cell membrane. It is found in the basolateral cell membrane. The enzyme catalyses ATP + H2O + xenobioticSide 1 = ADP + phosphate + xenobioticSide 2.. The catalysed reaction is an S-substituted glutathione(in) + ATP + H2O = an S-substituted glutathione(out) + ADP + phosphate + H(+). It catalyses the reaction sphing-4-enine 1-phosphate(in) + ATP + H2O = sphing-4-enine 1-phosphate(out) + ADP + phosphate + H(+). It carries out the reaction leukotriene C4(in) + ATP + H2O = leukotriene C4(out) + ADP + phosphate + H(+). The enzyme catalyses 17beta-estradiol 17-O-(beta-D-glucuronate)(in) + ATP + H2O = 17beta-estradiol 17-O-(beta-D-glucuronate)(out) + ADP + phosphate + H(+). The catalysed reaction is daunorubicin(in) + ATP + H2O = daunorubicin(out) + ADP + phosphate + H(+). It catalyses the reaction vincristine(in) + ATP + H2O = vincristine(out) + ADP + phosphate + H(+). It carries out the reaction 2',3'-cGAMP(in) + ATP + H2O = 2',3'-cGAMP(out) + ADP + phosphate + H(+). The enzyme catalyses S-[(2E,6E,10E)-geranylgeranyl]-L-glutathione(in) + ATP + H2O = S-[(2E,6E,10E)-geranylgeranyl]-L-glutathione(out) + ADP + phosphate + H(+). The catalysed reaction is prostaglandin A2-S-(R)-glutathione(in) + ATP + H2O = prostaglandin A2-S-(R)-glutathione(out) + ADP + phosphate + H(+). It catalyses the reaction prostaglandin A2-S-(S)-glutathione(in) + ATP + H2O = prostaglandin A2-S-(S)-glutathione(out) + ADP + phosphate + H(+). MK 571 inhibits sphingosine 1-phosphate and leukotriene C4 export. Functionally, mediates export of organic anions and drugs from the cytoplasm. Mediates ATP-dependent transport of glutathione and glutathione conjugates, leukotriene C4, estradiol-17-beta-o-glucuronide, methotrexate, antiviral drugs and other xenobiotics. Confers resistance to anticancer drugs by decreasing accumulation of drug in cells, and by mediating ATP- and GSH-dependent drug export. Hydrolyzes ATP with low efficiency. Catalyzes the export of sphingosine 1-phosphate from mast cells independently of their degranulation. Participates in inflammatory response by allowing export of leukotriene C4 from leukotriene C4-synthesizing cells. Exports S-geranylgeranyl-glutathione (GGG) in lymphoid cells and stromal compartments of lymphoid organs. ABCC1 (via extracellular transport) with GGT5 (via GGG catabolism) establish GGG gradients within lymphoid tissues to position P2RY8-positive lymphocytes at germinal centers in lymphoid follicles and restrict their chemotactic transmigration from blood vessels to the bone marrow parenchyma. Mediates basolateral export of GSH-conjugated R- and S-prostaglandin A2 diastereomers in polarized epithelial cells. The chain is Multidrug resistance-associated protein 1 from Rattus norvegicus (Rat).